A 1251-amino-acid chain; its full sequence is Cyclic nucleotide-gated channel beta-1 (1251 aa).

4 disordered regions span residues 1 to 75 (MLGW…QETK), 121 to 151 (ITED…EAQD), 172 to 252 (QPPK…TRDP), and 314 to 561 (EDAH…STNS). Residues 1–656 (MLGWVQRVLP…SIDPLTNLMY (656 aa)) are Cytoplasmic-facing. Over residues 23 to 50 (EEEEVEPEPEMEAEVEPEPNPEEAETES) the composition is skewed to acidic residues. Polar residues predominate over residues 238–247 (GSQAQTSSLP). Positions 335-352 (EENKAVEKMPRELSRIEE) are enriched in basic and acidic residues. Over residues 353 to 373 (EKEDEEEEEEEEEEEEEEEVT) the composition is skewed to acidic residues. A compositionally biased stretch (basic and acidic residues) spans 404-423 (KLWEEVGEEAKKEAEEKAKE). Acidic residues predominate over residues 424–434 (EAEEVAEEEAE). Over residues 435–446 (KEPQDWAETKEE) the composition is skewed to basic and acidic residues. The calmodulin-binding CaM1 stretch occupies residues 557–567 (ASTNSAIINDR). Residues 568-578 (LQELVKLFKER) carry the IQ-like motif. The segment at 585–619 (KLIDPDVTSDEESPKPSPAKKAPEPAPDTKPAEAE) is disordered. Residues 657-678 (VLWLFFVVMAWNWNCWLIPVRW) traverse the membrane as a helical segment. Topologically, residues 679 to 687 (AFPYQTPDN) are extracellular. A helical membrane pass occupies residues 688-709 (IHHWLLMDYLCDLIYFLDITVF). Residues 710–724 (QTRLQFVRGGDIITD) lie on the Cytoplasmic side of the membrane. The chain crosses the membrane as a helical span at residues 725–744 (KKDMRNNYLKSRRFKMDLLS). Residues 745-760 (LLPLDFLYLKVGVNPL) are Extracellular-facing. The chain crosses the membrane as a helical span at residues 761-773 (LRLPRCLKYMAFF). Topologically, residues 774-785 (EFNSRLESILSK) are cytoplasmic. A helical membrane pass occupies residues 786–808 (AYVYRVIRTTAYLLYSLHLNSCL). The segment at 786–885 (AYVYRVIRTT…IGQMRDVVGA (100 aa)) is ion conduction pathway. Over 809 to 831 (YYWASAYQGLGSTHWVYDGVGNS) the chain is Extracellular. Helical transmembrane passes span 832–858 (YIRC…LFEI) and 859–884 (VFQL…DVVG). The Cytoplasmic portion of the chain corresponds to 885 to 1251 (AATAGQTYYR…MPEEREEKAE (367 aa)). A C-linker region spans residues 888 to 964 (AGQTYYRSCM…NIVSKVALFQ (77 aa)). The interval 968–1084 (RQMIFDMLKR…LLRKKARRML (117 aa)) is cyclic nucleotide-binding domain. 3',5'-cyclic GMP is bound by residues Gly1029, Glu1030, Ser1032, Arg1042, and Thr1043. Residue Arg1042 participates in 3',5'-cyclic AMP binding. The calmodulin-binding CaM2 stretch occupies residues 1148-1154 (QQELVEQ). The segment at 1151–1251 (LVEQAKSSQD…MPEEREEKAE (101 aa)) is disordered. Residues 1183–1203 (PPAPRTPPEPPGSPPSSPPPA) show a composition bias toward pro residues. Over residues 1242–1251 (MPEEREEKAE) the composition is skewed to basic and acidic residues.

This sequence belongs to the cyclic nucleotide-gated cation channel (TC 1.A.1.5) family. CNGB1 subfamily. The rod cyclic nucleotide-gated channel is a heterotetramer composed of CNGA1 and CNGB1 subunits with 3:1 stoichiometry. CNGA1:CNGB1 channel binds Ca(2+)-bound CALM1 via CaM1 and CaM2 regions of the CNGB1 subunit; this interaction modulates the affinity of the channel for cNMPs in response to intracellular Ca(2+) levels. The olfactory cyclic nucleotide-gated channel is a heterotetramer composed of CNGA2, CNGA4 and CNGB1 subunits with 2:1:1 stoichiometry.

It localises to the cell membrane. Its subcellular location is the cell projection. The protein localises to the cilium membrane. It carries out the reaction Ca(2+)(in) = Ca(2+)(out). The catalysed reaction is Na(+)(in) = Na(+)(out). It catalyses the reaction K(+)(in) = K(+)(out). The enzyme catalyses NH4(+)(in) = NH4(+)(out). It carries out the reaction Rb(+)(in) = Rb(+)(out). The catalysed reaction is Li(+)(in) = Li(+)(out). It catalyses the reaction Cs(+)(in) = Cs(+)(out). Functionally, pore-forming subunit of the rod cyclic nucleotide-gated channel. Mediates rod photoresponses at dim light converting transient changes in intracellular cGMP levels into electrical signals. In the dark, cGMP levels are high and keep the channel open enabling a steady inward current carried by Na(+) and Ca(2+) ions that leads to membrane depolarization and neurotransmitter release from synaptic terminals. Upon photon absorption cGMP levels decline leading to channel closure and membrane hyperpolarization that ultimately slows neurotransmitter release and signals the presence of light, the end point of the phototransduction cascade. Pore-forming subunit of the olfactory cyclic nucleotide-gated channel. Operates in the cilia of olfactory sensory neurons where chemical stimulation of the odorant is converted to an electrical signal. Mediates odorant-induced cAMP-dependent Ca(2+) influx triggering neuron depolarization. The rise of intracellular Ca(2+) levels potentiates the olfactory response by activating Ca(2+)-dependent Cl(-) channels, but it also serves as a negative feedback signal to desensitize the channel for rapid adaptation to odorants. Conducts cGMP- and cAMP-gated ion currents, with permeability for monovalent and divalent cations. The selectivity for Ca(2+) over Na(+) increases with cGMP concentrations, whereas the selectivity among monovalent ions is independent of the cGMP levels. High affinity rod photoreceptor phosphodiesterase (PDE6)-binding protein that modulates its catalytic properties: it is a regulator of spontaneous activation of rod PDE6, thereby serving to lower rod photoreceptor 'dark noise' and allowing these sensory cells to operate at the single photon detection limit. This Homo sapiens (Human) protein is Cyclic nucleotide-gated channel beta-1.